We begin with the raw amino-acid sequence, 1348 residues long: Vascular endothelial growth factor receptor 2 (1348 aa).

Positions 1–20 are cleaved as a signal peptide; the sequence is MELGPLRVLTVLLCLAPVFA. Topologically, residues 21–756 are extracellular; the sequence is GLFISMDQPT…GAEEKTNLEL (736 aa). Asparagine 43, asparagine 47, asparagine 63, asparagine 93, asparagine 138, asparagine 153, asparagine 201, asparagine 240, asparagine 290, asparagine 310, asparagine 365, asparagine 386, asparagine 513, asparagine 556, asparagine 603, asparagine 613, asparagine 622, asparagine 666, asparagine 688, and asparagine 710 each carry an N-linked (GlcNAc...) asparagine glycan. Ig-like C2-type domains follow at residues 43–106, 138–202, 220–312, 320–405, 412–534, 540–651, and 658–744; these read NDTL…GDSQ, NKTV…IDNE, DLTM…KNSS, PFIH…HTFT, PQIG…RVIS, GLEI…KHLT, and PRLV…AFFS. Cysteines 50 and 100 form a disulfide. Residues cysteine 145 and cysteine 195 are joined by a disulfide bond. Cysteines 241 and 299 form a disulfide. Residues cysteine 436 and cysteine 520 are joined by a disulfide bond. A disulfide bond links cysteine 561 and cysteine 633. Cysteine 679 and cysteine 728 are oxidised to a cystine. The helical transmembrane segment at 757–777 threads the bilayer; sequence IILVGTAVIAMFFWLLLVIIL. The Cytoplasmic portion of the chain corresponds to 778–1348; sequence RTVKRANGGD…SPAPVASLPL (571 aa). In terms of domain architecture, Protein kinase spans 825 to 1155; it reads LKLGKPLGRG…FSELVEHLGN (331 aa). ATP-binding positions include 831-839 and lysine 859; that span reads LGRGAFGQV. A compositionally biased stretch (low complexity) spans 958 to 967; it reads ITSSQSSTSS. The tract at residues 958-983 is disordered; it reads ITSSQSSTSSGFVEERSLSDVEEEDA. Aspartate 1021 serves as the catalytic Proton acceptor. Residues tyrosine 1047, tyrosine 1052, tyrosine 1168, and tyrosine 1207 each carry the phosphotyrosine; by autocatalysis modification. A disordered region spans residues 1280-1302; the sequence is PSKSNESVMSEASNQTSGYQSGY.

The protein belongs to the protein kinase superfamily. Tyr protein kinase family. CSF-1/PDGF receptor subfamily. Autophosphorylated on tyrosine residues upon ligand binding. Autophosphorylation occurs in trans, i.e. one subunit of the dimeric receptor phosphorylates tyrosine residues on the other subunit. In terms of tissue distribution, in all endothelial tissues during onset of vascularization. In later development, present in lung, heart, intestine and skin.

The protein resides in the cell membrane. It is found in the cytoplasmic vesicle. The protein localises to the early endosome. Its subcellular location is the cell junction. It localises to the endoplasmic reticulum. It catalyses the reaction L-tyrosyl-[protein] + ATP = O-phospho-L-tyrosyl-[protein] + ADP + H(+). With respect to regulation, present in an inactive conformation in the absence of bound ligand. Binding of VEGFA, VEGFC or VEGFD leads to dimerization and activation by autophosphorylation on tyrosine residues. Its function is as follows. Tyrosine-protein kinase that acts as a cell-surface receptor for VEGFA, VEGFC and/or VEGFD and plays an essential role in the regulation of angiogenesis and vascular development. Promotes proliferation, survival, migration and differentiation of endothelial cells. Promotes reorganization of the actin cytoskeleton. Binding of vascular growth factors leads to the activation of several signaling cascades. Activation of PLCG1 leads to the production of the cellular signaling molecules diacylglycerol and inositol 1,4,5-trisphosphate and the activation of protein kinase C. Mediates activation of MAPK1/ERK2, MAPK3/ERK1 and the MAP kinase signaling pathway, as well as of the AKT1 signaling pathway. Mediates phosphorylation of PIK3R1, the regulatory subunit of phosphatidylinositol 3-kinase, reorganization of the actin cytoskeleton and activation of PTK2/FAK1. Required for VEGFA-mediated induction of NOS2 and NOS3, leading to the production of the signaling molecule nitric oxide (NO) by endothelial cells. The sequence is that of Vascular endothelial growth factor receptor 2 from Coturnix japonica (Japanese quail).